Here is a 1093-residue protein sequence, read N- to C-terminus: GPI ethanolamine phosphate transferase 3, catalytic subunit (1093 aa).

The helical transmembrane segment at 4–24 threads the bilayer; the sequence is VSVLLFLAWVCFLFYAGIALF. N-linked (GlcNAc...) asparagine glycosylation is present at Asn268. 9 consecutive transmembrane segments (helical) span residues 460-480, 483-503, 512-532, 669-689, 702-722, 748-768, 831-851, 856-876, and 945-965; these read AAACLLCLLASQLAVAPGFLF, LLLIPVAWGLTWTILYAGVSV, VVLGAVAAAGSLLPFLWKAWV, LWYGACVGALVALLVVVRLWL, VLFVRWGMPLMVLGTAAYWAL, VMGLAALGLVLLLWRPVTVLV, SVYSAAMVTALLLLAFPLMLL, VSLVFLLLFLQSFLLLHLLAA, and FASHLLFAVGCPLLLLWPFLC. The interval 971 to 991 is disordered; sequence KRRQPLPGSESEARVRPEEEE. Helical transmembrane passes span 1018 to 1038 and 1052 to 1072; these read LKYLFILGAQILACALAASIL and FIFEAVGFIVSSVGLLLGIAL.

It belongs to the PIGG/PIGN/PIGO family. PIGO subfamily. In terms of assembly, forms the ethanolamine phosphate transferase 3 complex composed by PIGO and PIGF. PIGF is required to stabilize PIGO.

The protein resides in the endoplasmic reticulum membrane. It participates in glycolipid biosynthesis; glycosylphosphatidylinositol-anchor biosynthesis. Catalytic subunit of the ethanolamine phosphate transferase 3 complex that transfers an ethanolamine phosphate (EtNP) from a phosphatidylethanolamine (PE) to the 6-OH position of the third alpha-1,2-linked mannose of the an alpha-D-Man-(1-&gt;2)-alpha-D-Man-(1-&gt;6)-2-PEtn-alpha-D-Man-(1-&gt;4)-alpha-D-GlcN-(1-&gt;6)-(1-radyl,2-acyl-sn-glycero-3-phospho)-2-acyl-inositol (also termed H6) intermediate to generate a 6-PEtn-alpha-D-Man-(1-&gt;2)-alpha-D-Man-(1-&gt;6)-2-PEtn-alpha-D-Man-(1-&gt;4)-alpha-D-GlcN-(1-&gt;6)-(1-radyl,2-acyl-sn-glycero-3-phospho)-2-acyl-inositol (also termed H7) and participates in the tenth step of the glycosylphosphatidylinositol-anchor biosynthesis. The polypeptide is GPI ethanolamine phosphate transferase 3, catalytic subunit (Mus musculus (Mouse)).